Reading from the N-terminus, the 142-residue chain is Transcriptional regulator MraZ (142 aa).

SpoVT-AbrB domains lie at 5-51 (ASSL…PRPV) and 77-120 (ASDV…DATK).

This sequence belongs to the MraZ family. As to quaternary structure, forms oligomers.

Its subcellular location is the cytoplasm. The protein localises to the nucleoid. This chain is Transcriptional regulator MraZ, found in Janthinobacterium sp. (strain Marseille) (Minibacterium massiliensis).